Consider the following 429-residue polypeptide: Putative pentatricopeptide repeat-containing protein At1g03510 (429 aa).

PPR repeat units follow at residues 11-45 (KLIS…FALP), 47-81 (DAHV…NFLS), 82-112 (NPFV…IPQR), 113-147 (NAVV…PNES), 148-180 (SFNA…RFKP), 181-215 (NLIT…LIEP), 216-246 (HPQL…MEDR), 247-281 (DVVA…KVTP), 282-312 (DDIA…MQGD), and 318-348 (SKDH…MPEK). Positions 353–428 (TWGALLGACR…SPGSSWCLFK (76 aa)) are type E motif.

It belongs to the PPR family. PCMP-E subfamily.

The protein is Putative pentatricopeptide repeat-containing protein At1g03510 (PCMP-E3) of Arabidopsis thaliana (Mouse-ear cress).